Consider the following 1029-residue polypeptide: MNGPTSQRAKRKQGSASSLDDRPPKHQRALNGAKQQSTGDNTPEEDMYDQGLDDEDLLAQALLPSVGPDTVEWQATIQKVVSNVVSIRFCQTCSFDTDAALTSEATGFVVDAERGYILTNRHVVGSGPFWGYCIFDNHEEVDAYPVYRDPVHDFGILKFDPKAIKYMPVAALPLRPDLAKVGVEIRVVGNDAGEKLSILSGVISRLDRNAPEYGEGYSDFNTCYYQASAAASGGSSGSPVVNIDGFAVALQAGGRADGASTDYFLPLDRPLRALQCLQQGKPITRGDIQCQFLLKPFDECRRLGLAPEWEAQMRKAFPKETNLLVAEIILPEGPSSNKVEEGDVLLKVNEELITEFIRLDDILDSNVGKPVKLLLQRGGEDVEVEVDVGDLHSITPDRFVSVAGGSFHSLSYQQARLYGVACKGVYVCEATGSFRFETSDNGWILQTIDNKKVPDLETFIQVVKNIPDKARVVVTYKHLRDLHTLNTTIIYVDRHWSSKMKLAVRNDDTGLWDFTDLADALPPVPPVPRKASFIQLEHTSHPAVAELVRSFVHVTCTMPMKLDGFPKNRKWGMGLVIDAEKGLVVISRAIVPYDLCDISITIGESIVVEGKVVFLHPLQNYAIIQYDPKLVDAPVQSAKLSSEEITQGASTYFIGYNRIGRVVHTATTVTEIFAVAIPANSGAPRYRAVNVDAITVDTNLSGQCGSGVLVAPDGTVQALWLTYLGERSPSTHRDEEYHLGLATPTLLPVVKQIQQGIVPKLRMLSVEFRSIQMAQARIMGVSEEWIQQVSLANTSHHQLFMVTKRTFERDQDENSGALLEGDILLTLNDKLITRISELDIMYSHEFLGAVIVRETKELKLKLPTVAADDVETDHAVSFCGAIFHRPHQAVRQQISKLYSEVYVSARTRGSPSYQYGLAPTNFITHVNGKRTPDLKTFLAAVTAIPDNTYFRLKAVTFDSVPWVVTMKKNEHYFPTVEWIKDSSEDCGWRRVTYEGGKAMEGEPSEGVPAVEEEAGGAVDDDVPMAAVEK.

The interval 1–49 (MNGPTSQRAKRKQGSASSLDDRPPKHQRALNGAKQQSTGDNTPEEDMYD) is disordered. Residues 84–274 (VVSIRFCQTC…LPLDRPLRAL (191 aa)) are serine protease. Active-site charge relay system residues include H122, D153, and S235. 2 PDZ domains span residues 307–379 (PEWE…QRGG) and 845–958 (EFLG…VTFD). The tract at residues 997–1029 (KAMEGEPSEGVPAVEEEAGGAVDDDVPMAAVEK) is disordered. Over residues 1010-1022 (VEEEAGGAVDDDV) the composition is skewed to acidic residues.

It belongs to the peptidase S1C family.

The protein localises to the nucleus. Functionally, nuclear serine protease which mediates apoptosis. The sequence is that of Pro-apoptotic serine protease NMA111 (NMA111) from Pyricularia oryzae (strain 70-15 / ATCC MYA-4617 / FGSC 8958) (Rice blast fungus).